A 209-amino-acid chain; its full sequence is Molybdenum cofactor guanylyltransferase (209 aa).

GTP contacts are provided by residues 16–18, lysine 28, asparagine 56, aspartate 69, and aspartate 103; that span reads LAG. Aspartate 103 is a Mg(2+) binding site.

This sequence belongs to the MobA family. In terms of assembly, monomer. It depends on Mg(2+) as a cofactor.

The protein localises to the cytoplasm. It catalyses the reaction Mo-molybdopterin + GTP + H(+) = Mo-molybdopterin guanine dinucleotide + diphosphate. Transfers a GMP moiety from GTP to Mo-molybdopterin (Mo-MPT) cofactor (Moco or molybdenum cofactor) to form Mo-molybdopterin guanine dinucleotide (Mo-MGD) cofactor. The polypeptide is Molybdenum cofactor guanylyltransferase (Rhizobium leguminosarum bv. trifolii (strain WSM2304)).